The primary structure comprises 704 residues: Structure-specific endonuclease subunit SLX1 homolog (704 aa).

One can recognise a GIY-YIG domain in the interval 4-90; that stretch reads RFHCVYLLTS…TASARLRHTI (87 aa). Disordered stretches follow at residues 157–180, 290–323, and 354–378; these read ESPR…ADGV, ASFA…RVRT, and GAAL…SRPP. Polar residues-rich tracts occupy residues 161–175 and 311–320; these read VGTQ…SLQG and AGSSTPSPQR. The segment at 446 to 526 adopts an SLX1-type zinc-finger fold; the sequence is CSLCALPLQP…PSQPCPCPLC (81 aa). Disordered regions lie at residues 601-629 and 650-671; these read VPGA…SSPI and ASLA…GHSN. Residues 650 to 662 are compositionally biased toward low complexity; that stretch reads ASLAALSPTSASP.

This sequence belongs to the SLX1 family. Forms a heterodimer with a member of the SLX4 family. A divalent metal cation serves as cofactor.

The protein resides in the nucleus. Functionally, catalytic subunit of a heterodimeric structure-specific endonuclease that resolves DNA secondary structures generated during DNA repair and recombination. Has endonuclease activity towards branched DNA substrates, introducing single-strand cuts in duplex DNA close to junctions with ss-DNA. The polypeptide is Structure-specific endonuclease subunit SLX1 homolog (Leishmania major).